Reading from the N-terminus, the 252-residue chain is Iron-sulfur cluster co-chaperone protein HscB homolog (252 aa).

A mitochondrion-targeting transit peptide spans 1 to 59; it reads MKKTKTMVASISTLIRRTYPSTNQCNSLATIQSQTQLPRESLQHHSSAEGRLRFSGRVF. In terms of domain architecture, J spans 93 to 165; it reads DYFQIFGLEK…LSRAMYIMKL (73 aa).

Belongs to the HscB family. As to quaternary structure, interacts with ISU1 and HSP70-9/HSCA1.

Its subcellular location is the mitochondrion. The protein resides in the cytoplasm. It is found in the cytosol. Functionally, co-chaperone required for the assembly of iron-sulfur [Fe-S] clusters in both mitochondria and cytosol. Required for the activity of iron-sulfur proteins such as aconitase and succinate dehydrogenase. Involved in iron homeostasis and may take part in the control of iron translocation from roots to shoots. This Arabidopsis thaliana (Mouse-ear cress) protein is Iron-sulfur cluster co-chaperone protein HscB homolog.